The primary structure comprises 100 residues: Aspartyl/glutamyl-tRNA(Asn/Gln) amidotransferase subunit C (100 aa).

Belongs to the GatC family. In terms of assembly, heterotrimer of A, B and C subunits.

It carries out the reaction L-glutamyl-tRNA(Gln) + L-glutamine + ATP + H2O = L-glutaminyl-tRNA(Gln) + L-glutamate + ADP + phosphate + H(+). The catalysed reaction is L-aspartyl-tRNA(Asn) + L-glutamine + ATP + H2O = L-asparaginyl-tRNA(Asn) + L-glutamate + ADP + phosphate + 2 H(+). Allows the formation of correctly charged Asn-tRNA(Asn) or Gln-tRNA(Gln) through the transamidation of misacylated Asp-tRNA(Asn) or Glu-tRNA(Gln) in organisms which lack either or both of asparaginyl-tRNA or glutaminyl-tRNA synthetases. The reaction takes place in the presence of glutamine and ATP through an activated phospho-Asp-tRNA(Asn) or phospho-Glu-tRNA(Gln). The sequence is that of Aspartyl/glutamyl-tRNA(Asn/Gln) amidotransferase subunit C from Streptococcus thermophilus (strain ATCC BAA-491 / LMD-9).